The sequence spans 559 residues: Peptidyl-prolyl isomerase cwc27 (559 aa).

The PPIase cyclophilin-type domain maps to 11–184 (PTASATLHTT…YPVKVVSCEV (174 aa)). Disordered regions lie at residues 201-395 (ATAP…GFSS), 413-449 (ESAD…EDEE), and 518-559 (PRER…REKP). A compositionally biased stretch (basic and acidic residues) spans 261–273 (APKKTSPEAEQQT). The span at 305-319 (LPDPESPARSPPQSP) shows a compositional bias: pro residues. Composition is skewed to polar residues over residues 384–394 (GSSTNGVTGFS) and 425–442 (TSIS…AKSN).

It belongs to the cyclophilin-type PPIase family. CWC27 subfamily. In terms of assembly, associated with the spliceosome.

The protein localises to the cytoplasm. It is found in the nucleus. The catalysed reaction is [protein]-peptidylproline (omega=180) = [protein]-peptidylproline (omega=0). Functionally, PPIases accelerate the folding of proteins. It catalyzes the cis-trans isomerization of proline imidic peptide bonds in oligopeptides. Involved in pre-mRNA splicing. In Aspergillus fumigatus (strain ATCC MYA-4609 / CBS 101355 / FGSC A1100 / Af293) (Neosartorya fumigata), this protein is Peptidyl-prolyl isomerase cwc27 (cwc27).